The chain runs to 329 residues: GTP 3',8-cyclase (329 aa).

The 227-residue stretch at 8-234 (AFARKFYYLR…QLRQRSDGPA (227 aa)) folds into the Radical SAM core domain. Arginine 17 is a GTP binding site. Positions 24 and 28 each coordinate [4Fe-4S] cluster. Tyrosine 30 lines the S-adenosyl-L-methionine pocket. [4Fe-4S] cluster is bound at residue cysteine 31. A GTP-binding site is contributed by arginine 68. Glycine 72 is a binding site for S-adenosyl-L-methionine. Threonine 99 contributes to the GTP binding site. Residue serine 123 coordinates S-adenosyl-L-methionine. A GTP-binding site is contributed by lysine 160. Methionine 194 serves as a coordination point for S-adenosyl-L-methionine. [4Fe-4S] cluster contacts are provided by cysteine 257 and cysteine 260. GTP is bound at residue 262–264 (RLR). Cysteine 274 is a [4Fe-4S] cluster binding site.

It belongs to the radical SAM superfamily. MoaA family. Monomer and homodimer. Requires [4Fe-4S] cluster as cofactor.

It carries out the reaction GTP + AH2 + S-adenosyl-L-methionine = (8S)-3',8-cyclo-7,8-dihydroguanosine 5'-triphosphate + 5'-deoxyadenosine + L-methionine + A + H(+). It functions in the pathway cofactor biosynthesis; molybdopterin biosynthesis. Its function is as follows. Catalyzes the cyclization of GTP to (8S)-3',8-cyclo-7,8-dihydroguanosine 5'-triphosphate. The polypeptide is GTP 3',8-cyclase (Salmonella newport (strain SL254)).